The sequence spans 161 residues: Nucleotide-binding protein amb3630 (161 aa).

It belongs to the YajQ family.

Nucleotide-binding protein. The chain is Nucleotide-binding protein amb3630 from Paramagnetospirillum magneticum (strain ATCC 700264 / AMB-1) (Magnetospirillum magneticum).